Here is an 89-residue protein sequence, read N- to C-terminus: Barrier-to-autointegration factor 1 (89 aa).

It belongs to the BAF family. In terms of assembly, interacts with emr-1 and lem-2. Interacts with lem-4l, leading to decreased phosphorylation by VRK1 and promoting dephosphorylation by protein phosphatase 2A (PP2A). In terms of processing, phosphorylated by vrk-1. Phosphorylation by vrk-1 in mitosis is essential to achieve correct timing of recruitment of nuclear envelope components during nuclear envelope assembly. Dephosphorylated by protein phosphatase 2A (PP2A) following interaction with lem-4l during mitotic exit, leading to mitotic nuclear envelope reassembly.

It localises to the nucleus. Its function is as follows. DNA-binding protein which plays an essential role in nuclear envelope formation. Required for normal chromosome segregation during mitosis. Associates with the nuclear lamina via its interaction with LEM domain containing proteins emr-1 and lem-2. In association with lem-3, plays a role in radiation-induced DNA damage repair response. The polypeptide is Barrier-to-autointegration factor 1 (baf-1) (Caenorhabditis elegans).